Reading from the N-terminus, the 361-residue chain is Versatile peroxidase VPL2 (361 aa).

The signal sequence occupies residues 1–22 (MSFKTLSALALALGAAVQFASA). The propeptide occupies 23 to 30 (AVPLVQKR). 4 cysteine pairs are disulfide-bonded: Cys33–Cys45, Cys44–Cys308, Cys64–Cys144, and Cys272–Cys337. Mn(2+) contacts are provided by Glu66 and Glu70. His77 functions as the Proton acceptor in the catalytic mechanism. Positions 78, 90, 92, and 94 each coordinate Ca(2+). N-linked (GlcNAc...) asparagine glycosylation is present at Asn126. Trp194 functions as the Tryptophan radical intermediate in the catalytic mechanism. Heme b is bound at residue His199. Residue Ser200 participates in Ca(2+) binding. 203–207 (AADKV) is a binding site for heme b. Asp205 contributes to the Mn(2+) binding site. The Ca(2+) site is built by Asp217, Thr219, Val222, and Asp224.

The protein belongs to the peroxidase family. Ligninase subfamily. It depends on heme b as a cofactor. The cofactor is Ca(2+).

It is found in the secreted. It catalyses the reaction 1-(4-hydroxy-3-methoxyphenyl)-2-(2-methoxyphenoxy)propane-1,3-diol + H2O2 = guaiacol + vanillin + glycolaldehyde + H2O. It carries out the reaction 2 Mn(2+) + H2O2 + 2 H(+) = 2 Mn(3+) + 2 H2O. A versatile ligninolytic peroxidase that combines the substrate specificity characteristics of the two other ligninolytic peroxidases, manganese peroxidase and lignin peroxidase. The protein is Versatile peroxidase VPL2 (vpl2) of Pleurotus eryngii (Boletus of the steppes).